The following is a 102-amino-acid chain: NADH-quinone oxidoreductase subunit K (102 aa).

Helical transmembrane passes span 6 to 26 (LEHGLAVAGILFCLGLVGLMV), 30 to 50 (ILFVLMSLEIMMNAAALAFIV), and 62 to 82 (VMFILVISLAAAEASIGLAIL).

This sequence belongs to the complex I subunit 4L family. In terms of assembly, NDH-1 is composed of 13 different subunits. Subunits NuoA, H, J, K, L, M, N constitute the membrane sector of the complex.

The protein resides in the cell inner membrane. The catalysed reaction is a quinone + NADH + 5 H(+)(in) = a quinol + NAD(+) + 4 H(+)(out). NDH-1 shuttles electrons from NADH, via FMN and iron-sulfur (Fe-S) centers, to quinones in the respiratory chain. The immediate electron acceptor for the enzyme in this species is believed to be ubiquinone. Couples the redox reaction to proton translocation (for every two electrons transferred, four hydrogen ions are translocated across the cytoplasmic membrane), and thus conserves the redox energy in a proton gradient. The polypeptide is NADH-quinone oxidoreductase subunit K (Pseudomonas fluorescens (strain SBW25)).